The primary structure comprises 340 residues: DNA-directed RNA polymerase subunit alpha (340 aa).

The segment at 1–237 (MSSDELVYMN…EQMNPFINFD (237 aa)) is alpha N-terminal domain (alpha-NTD). The alpha C-terminal domain (alpha-CTD) stretch occupies residues 256–340 (FNENLYRSVD…PEEDQIKEGE (85 aa)).

It belongs to the RNA polymerase alpha chain family. Homodimer. The RNAP catalytic core consists of 2 alpha, 1 beta, 1 beta' and 1 omega subunit. When a sigma factor is associated with the core the holoenzyme is formed, which can initiate transcription.

The catalysed reaction is RNA(n) + a ribonucleoside 5'-triphosphate = RNA(n+1) + diphosphate. Its function is as follows. DNA-dependent RNA polymerase catalyzes the transcription of DNA into RNA using the four ribonucleoside triphosphates as substrates. The sequence is that of DNA-directed RNA polymerase subunit alpha from Desulforapulum autotrophicum (strain ATCC 43914 / DSM 3382 / VKM B-1955 / HRM2) (Desulfobacterium autotrophicum).